Here is an 84-residue protein sequence, read N- to C-terminus: Esculentin-1B (84 aa).

Positions 1–22 are cleaved as a signal peptide; sequence MFTLKKPLLLIVLLGMISLSLC. The propeptide occupies 23–38; the sequence is EQERNADEEEGSEIKR. Cysteines 78 and 84 form a disulfide.

It belongs to the frog skin active peptide (FSAP) family. Brevinin subfamily. Expressed by the skin glands.

The protein localises to the secreted. Functionally, shows antibacterial activity against representative Gram-negative and Gram-positive bacterial species, and hemolytic activity. This chain is Esculentin-1B, found in Pelophylax lessonae (Pool frog).